A 320-amino-acid chain; its full sequence is Putative polysaccharide deacetylase (320 aa).

A NodB homology domain is found at arginine 69–alanine 303.

The protein belongs to the polysaccharide deacetylase family. Homodimer.

The protein localises to the prospore. Functionally, may deacetylate chitin. Required for spore formation. In Schizosaccharomyces pombe (strain 972 / ATCC 24843) (Fission yeast), this protein is Putative polysaccharide deacetylase.